A 635-amino-acid polypeptide reads, in one-letter code: Threonine--tRNA ligase (635 aa).

Positions 1 to 61 constitute a TGS domain; sequence MITVRLPDGS…EQDSDLSIIT (61 aa). The catalytic stretch occupies residues 242 to 533; that stretch reads DHRKLGRALD…LIENHAGALP (292 aa). Zn(2+) contacts are provided by Cys-333, His-384, and His-510.

This sequence belongs to the class-II aminoacyl-tRNA synthetase family. Homodimer. The cofactor is Zn(2+).

The protein localises to the cytoplasm. The catalysed reaction is tRNA(Thr) + L-threonine + ATP = L-threonyl-tRNA(Thr) + AMP + diphosphate + H(+). Its function is as follows. Catalyzes the attachment of threonine to tRNA(Thr) in a two-step reaction: L-threonine is first activated by ATP to form Thr-AMP and then transferred to the acceptor end of tRNA(Thr). Also edits incorrectly charged L-seryl-tRNA(Thr). The chain is Threonine--tRNA ligase from Herminiimonas arsenicoxydans.